The sequence spans 431 residues: tRNA-2-methylthio-N(6)-dimethylallyladenosine synthase (431 aa).

Residues 4-120 form the MTTase N-terminal domain; it reads RAVYIKTFGC…IENIIENQVS (117 aa). Cys-13, Cys-49, Cys-83, Cys-154, Cys-158, and Cys-161 together coordinate [4Fe-4S] cluster. Residues 140–367 enclose the Radical SAM core domain; that stretch reads RKDCVKAWVN…LKLQDEITER (228 aa). The TRAM domain occupies 370–430; sequence KRLEGKIQEV…RHSLEGDIIS (61 aa).

The protein belongs to the methylthiotransferase family. MiaB subfamily. Monomer. The cofactor is [4Fe-4S] cluster.

The protein localises to the cytoplasm. The catalysed reaction is N(6)-dimethylallyladenosine(37) in tRNA + (sulfur carrier)-SH + AH2 + 2 S-adenosyl-L-methionine = 2-methylsulfanyl-N(6)-dimethylallyladenosine(37) in tRNA + (sulfur carrier)-H + 5'-deoxyadenosine + L-methionine + A + S-adenosyl-L-homocysteine + 2 H(+). Catalyzes the methylthiolation of N6-(dimethylallyl)adenosine (i(6)A), leading to the formation of 2-methylthio-N6-(dimethylallyl)adenosine (ms(2)i(6)A) at position 37 in tRNAs that read codons beginning with uridine. The chain is tRNA-2-methylthio-N(6)-dimethylallyladenosine synthase from Thermodesulfovibrio yellowstonii (strain ATCC 51303 / DSM 11347 / YP87).